Consider the following 51-residue polypeptide: Large ribosomal subunit protein eL39 (51 aa).

Belongs to the eukaryotic ribosomal protein eL39 family.

The chain is Large ribosomal subunit protein eL39 from Methanococcoides burtonii (strain DSM 6242 / NBRC 107633 / OCM 468 / ACE-M).